A 383-amino-acid polypeptide reads, in one-letter code: 4-hydroxy-3-methylbut-2-en-1-yl diphosphate synthase (flavodoxin) (383 aa).

The [4Fe-4S] cluster site is built by C277, C280, C312, and E319.

This sequence belongs to the IspG family. [4Fe-4S] cluster is required as a cofactor.

The catalysed reaction is (2E)-4-hydroxy-3-methylbut-2-enyl diphosphate + oxidized [flavodoxin] + H2O + 2 H(+) = 2-C-methyl-D-erythritol 2,4-cyclic diphosphate + reduced [flavodoxin]. The protein operates within isoprenoid biosynthesis; isopentenyl diphosphate biosynthesis via DXP pathway; isopentenyl diphosphate from 1-deoxy-D-xylulose 5-phosphate: step 5/6. Converts 2C-methyl-D-erythritol 2,4-cyclodiphosphate (ME-2,4cPP) into 1-hydroxy-2-methyl-2-(E)-butenyl 4-diphosphate. This Caulobacter vibrioides (strain ATCC 19089 / CIP 103742 / CB 15) (Caulobacter crescentus) protein is 4-hydroxy-3-methylbut-2-en-1-yl diphosphate synthase (flavodoxin).